The chain runs to 177 residues: Adenylyl-sulfate kinase (177 aa).

12–19 (GLSGAGKT) contacts ATP. The Phosphoserine intermediate role is filled by serine 86.

Belongs to the APS kinase family.

It carries out the reaction adenosine 5'-phosphosulfate + ATP = 3'-phosphoadenylyl sulfate + ADP + H(+). It participates in sulfur metabolism; hydrogen sulfide biosynthesis; sulfite from sulfate: step 2/3. Its function is as follows. Catalyzes the synthesis of activated sulfate. The polypeptide is Adenylyl-sulfate kinase (Picosynechococcus sp. (strain ATCC 27264 / PCC 7002 / PR-6) (Agmenellum quadruplicatum)).